The chain runs to 362 residues: Oxygen-dependent coproporphyrinogen-III oxidase (362 aa).

Ser-118 lines the substrate pocket. Positions 122 and 132 each coordinate a divalent metal cation. His-132 serves as the catalytic Proton donor. 134 to 136 provides a ligand contact to substrate; it reads NYR. His-166 and His-196 together coordinate a divalent metal cation. The segment at 286–321 is important for dimerization; it reads YVEFNLVWDRGTIFGLQTNGRTESILMSLPPLVRWE.

The protein belongs to the aerobic coproporphyrinogen-III oxidase family. In terms of assembly, homodimer. Requires a divalent metal cation as cofactor.

It is found in the cytoplasm. The enzyme catalyses coproporphyrinogen III + O2 + 2 H(+) = protoporphyrinogen IX + 2 CO2 + 2 H2O. The protein operates within porphyrin-containing compound metabolism; protoporphyrin-IX biosynthesis; protoporphyrinogen-IX from coproporphyrinogen-III (O2 route): step 1/1. Involved in the heme and chlorophyll biosynthesis. Catalyzes the aerobic oxidative decarboxylation of propionate groups of rings A and B of coproporphyrinogen-III to yield the vinyl groups in protoporphyrinogen-IX. The polypeptide is Oxygen-dependent coproporphyrinogen-III oxidase (Synechococcus sp. (strain CC9605)).